Consider the following 380-residue polypeptide: Probable protein phosphatase 2C 2 (380 aa).

The region spanning 69-339 (RSGSFADIGP…DNLTVIVICF (271 aa)) is the PPM-type phosphatase domain. The Mn(2+) site is built by Asp-113, Gly-114, Asp-287, and Asp-330.

Belongs to the PP2C family. Requires Mg(2+) as cofactor. Mn(2+) is required as a cofactor.

The catalysed reaction is O-phospho-L-seryl-[protein] + H2O = L-seryl-[protein] + phosphate. It catalyses the reaction O-phospho-L-threonyl-[protein] + H2O = L-threonyl-[protein] + phosphate. In Oryza sativa subsp. japonica (Rice), this protein is Probable protein phosphatase 2C 2.